A 194-amino-acid polypeptide reads, in one-letter code: Large ribosomal subunit protein bL9 (194 aa).

The protein belongs to the bacterial ribosomal protein bL9 family.

Functionally, binds to the 23S rRNA. The polypeptide is Large ribosomal subunit protein bL9 (Rhodopseudomonas palustris (strain BisA53)).